Consider the following 264-residue polypeptide: Agamous-like MADS-box protein AGL61 (264 aa).

An MADS-box domain is found at 62–122 (IGRQKIPMVK…KKPFSFGHPS (61 aa)).

Interacts with PHE1/AGL37, PHE2/AGL38, AGL80 and AGL86. Forms a heterodimer with AGL80. Expressed exclusively in the central cell of the female gametophyte and in early endosperm.

The protein resides in the nucleus. In terms of biological role, probable transcription factor. Controls central cell differentiation during female gametophyte development. The polypeptide is Agamous-like MADS-box protein AGL61 (AGL61) (Arabidopsis thaliana (Mouse-ear cress)).